We begin with the raw amino-acid sequence, 155 residues long: MNVEIVEREESKTAGFHLVGPWEVTAPEGFDKLVAWTSKHNVMGPWMGVYHGNPRAVPAEELKIETVIGVPTDFELPEGSEGARLSIIPAGTYAMNLVHVNDGDFTKPWYAFFDEWLPDSGYVMAEGPCFDHYLNDGSQSGEWDIELYIPVSKAE.

This sequence belongs to the DNA gyrase inhibitor family. As to quaternary structure, interacts with DNA gyrase.

Its subcellular location is the cytoplasm. Functionally, inhibits the supercoiling activity of DNA gyrase. Acts by inhibiting DNA gyrase at an early step, prior to (or at the step of) binding of DNA by the gyrase. It protects cells against toxins that target DNA gyrase, by inhibiting activity of these toxins and reducing the formation of lethal double-strand breaks in the cell. This chain is DNA gyrase inhibitor, found in Erwinia billingiae (strain Eb661).